A 181-amino-acid polypeptide reads, in one-letter code: TATA-box-binding protein (181 aa).

Repeat copies occupy residues 8 to 84 (IENI…VDLM) and 99 to 175 (IQNI…YDRL).

The protein belongs to the TBP family.

General factor that plays a role in the activation of archaeal genes transcribed by RNA polymerase. Binds specifically to the TATA box promoter element which lies close to the position of transcription initiation. The protein is TATA-box-binding protein of Methanobrevibacter smithii (strain ATCC 35061 / DSM 861 / OCM 144 / PS).